We begin with the raw amino-acid sequence, 269 residues long: Transcription factor MYB7 (269 aa).

2 HTH myb-type domains span residues 9–61 (KEHM…INYL) and 62–116 (RPDL…KRKL). 2 DNA-binding regions (H-T-H motif) span residues 37–61 (WRSL…INYL) and 89–112 (WSLI…NTHI).

In terms of assembly, interacts with SAD2. Expressed in anthers. Expressed in pollen grains and mature seeds. Expressed in roots and vasculature of leaves.

Its subcellular location is the nucleus. In terms of biological role, transcription factor involved in the negative regulation of flavonol biosynthesis. Represses the early phenylpropanoid genes, phenylalanine ammonia-lyase (PAL), cinnamate 4-hydroxylase (C4H) and 4-coumarate-CoA ligase (4CL), as well as the flavonoid-specific genes, flavonoid 3'-hydroxylase (F3'H) and dihydroflavonol 4-reductase (DFR). Plays a role in seed germination inhibition. Negatively regulates the expression of the abscisic acid (ABA) signaling transcription factor ABI5 in seeds. The polypeptide is Transcription factor MYB7 (Arabidopsis thaliana (Mouse-ear cress)).